A 395-amino-acid polypeptide reads, in one-letter code: Digeranylgeranylglycerophospholipid reductase (395 aa).

FAD contacts are provided by Ala-15, Asp-34, Cys-45, Ala-46, Gly-48, Arg-97, Ala-121, Asp-276, and Gly-288. The a 2,3-bis-O-(geranylgeranyl)-sn-glycerol 1-phospholipid site is built by Arg-329 and Gly-365.

This sequence belongs to the geranylgeranyl reductase family. DGGGPL reductase subfamily. The cofactor is FAD.

The catalysed reaction is a 2,3-bis-O-phytanyl-sn-glycerol 1-phospholipid + 8 A = a 2,3-bis-O-(geranylgeranyl)-sn-glycerol 1-phospholipid + 8 AH2. It catalyses the reaction 2,3-bis-O-(phytanyl)-sn-glycerol 1-phosphate + 8 A = 2,3-bis-O-(geranylgeranyl)-sn-glycerol 1-phosphate + 8 AH2. The enzyme catalyses CDP-2,3-bis-O-(geranylgeranyl)-sn-glycerol + 8 AH2 = CDP-2,3-bis-O-(phytanyl)-sn-glycerol + 8 A. It carries out the reaction archaetidylserine + 8 AH2 = 2,3-bis-O-phytanyl-sn-glycero-3-phospho-L-serine + 8 A. It functions in the pathway membrane lipid metabolism; glycerophospholipid metabolism. Its function is as follows. Is involved in the reduction of 2,3-digeranylgeranylglycerophospholipids (unsaturated archaeols) into 2,3-diphytanylglycerophospholipids (saturated archaeols) in the biosynthesis of archaeal membrane lipids. Catalyzes the formation of archaetidic acid (2,3-di-O-phytanyl-sn-glyceryl phosphate) from 2,3-di-O-geranylgeranylglyceryl phosphate (DGGGP) via the hydrogenation of each double bond of the isoprenoid chains. Is also probably able to reduce double bonds of geranyl groups in CDP-2,3-bis-O-(geranylgeranyl)-sn-glycerol and archaetidylserine, thus acting at various stages in the biosynthesis of archaeal membrane lipids. This chain is Digeranylgeranylglycerophospholipid reductase, found in Thermococcus gammatolerans (strain DSM 15229 / JCM 11827 / EJ3).